Reading from the N-terminus, the 264-residue chain is N-carbamoylsarcosine amidase (264 aa).

The active-site Nucleophile is the Cys177. The tract at residues 240 to 264 (TVPKTLSDPQPEVEAPADPVFAEQH) is disordered.

As to quaternary structure, homotetramer. The cofactor is sulfate.

It carries out the reaction N-carbamoylsarcosine + H2O + 2 H(+) = sarcosine + NH4(+) + CO2. It participates in amine and polyamine degradation; creatinine degradation; sarcosine from creatinine: step 3/3. The sequence is that of N-carbamoylsarcosine amidase from Arthrobacter sp.